The following is a 552-amino-acid chain: Glucose-6-phosphate isomerase (552 aa).

The active-site Proton donor is Glu-359. Residues His-390 and Lys-514 contribute to the active site.

It belongs to the GPI family.

The protein localises to the cytoplasm. The enzyme catalyses alpha-D-glucose 6-phosphate = beta-D-fructose 6-phosphate. It participates in carbohydrate biosynthesis; gluconeogenesis. It functions in the pathway carbohydrate degradation; glycolysis; D-glyceraldehyde 3-phosphate and glycerone phosphate from D-glucose: step 2/4. Its function is as follows. Catalyzes the reversible isomerization of glucose-6-phosphate to fructose-6-phosphate. The protein is Glucose-6-phosphate isomerase of Streptomyces griseus subsp. griseus (strain JCM 4626 / CBS 651.72 / NBRC 13350 / KCC S-0626 / ISP 5235).